The primary structure comprises 901 residues: HTH-type transcriptional regulator MalT (901 aa).

39–46 (SPAGYGKT) contributes to the ATP binding site. Residues 829–894 (ELIRTSPLTQ…AAVQHAQKLL (66 aa)) enclose the HTH luxR-type domain. The segment at residues 853–872 (NEQIAGELEVAATTIKTHIR) is a DNA-binding region (H-T-H motif).

The protein belongs to the MalT family. Monomer in solution. Oligomerizes to an active state in the presence of the positive effectors ATP and maltotriose.

Activated by ATP and maltotriose, which are both required for DNA binding. In terms of biological role, positively regulates the transcription of the maltose regulon whose gene products are responsible for uptake and catabolism of malto-oligosaccharides. Specifically binds to the promoter region of its target genes, recognizing a short DNA motif called the MalT box. The sequence is that of HTH-type transcriptional regulator MalT from Escherichia coli O139:H28 (strain E24377A / ETEC).